The primary structure comprises 200 residues: Serine/threonine-protein kinase mos (200 aa).

The region spanning 2-200 is the Protein kinase domain; that stretch reads LCLLQPLGSG…ELLKGERVTA (199 aa). ATP is bound by residues 8–16 and Lys29; that span reads LGSGGFGSV. Asp143 serves as the catalytic Proton acceptor.

The protein belongs to the protein kinase superfamily. Ser/Thr protein kinase family.

The enzyme catalyses L-seryl-[protein] + ATP = O-phospho-L-seryl-[protein] + ADP + H(+). The catalysed reaction is L-threonyl-[protein] + ATP = O-phospho-L-threonyl-[protein] + ADP + H(+). The chain is Serine/threonine-protein kinase mos (MOS) from Apteryx australis (Southern brown kiwi).